The chain runs to 297 residues: 4,5-DOPA dioxygenase extradiol-like protein (297 aa).

Histidine 30, histidine 82, histidine 205, and histidine 263 together coordinate Zn(2+).

The protein belongs to the DODA-type extradiol aromatic ring-opening dioxygenase family. The cofactor is Zn(2+).

The protein resides in the cytoplasm. It is found in the nucleus. Its function is as follows. May be involved in the metabolism of aromatic compounds. In Schizosaccharomyces pombe (strain 972 / ATCC 24843) (Fission yeast), this protein is 4,5-DOPA dioxygenase extradiol-like protein.